The chain runs to 117 residues: Cysteine rich necrotrophic effector Tox1 (117 aa).

The signal sequence occupies residues 1-17; the sequence is MKLTMVLSVAFATLTFA. 8 cysteine pairs are disulfide-bonded: C36-C87, C44-C55, C53-C58, C54-C98, C63-C83, C67-C117, C86-C97, and C107-C110. The segment at 87-117 is chitin-binding domain; the sequence is CNAGGESHELCCSIASAGIDCNPCTAGLRMC.

In terms of assembly, interacts with host cell wall-associated kinase receptor Snn1.

It localises to the secreted. Necrotrophic effector that plays a critical role during fungal penetration, via its interaction with the host Snn1 protein. Snn1 is a member of the wall-associated kinase class of receptors, which are known to drive pathways for biotrophic pathogen resistance. Recognition of Tox1 by Snn1 induces mitogen-activated protein kinase genes such as MAPK3 and activates programmed cell death, which allows this necrotroph to gain nutrients and sporulate. Recognition of Tox1 by Snn1 also induces other plant defense responses, including oxidative burst and pathogenesis related (PR) gene expression. The development of necrosis and disease induced by Tox1, and particularly penetration during infection, requires light, which is probably related to the light-dependent expression of host Snn1. Tox1 plays an additional role in providing significant protection from wheat chitinases by binding chitin in the fungal cell wall. The sequence is that of Cysteine rich necrotrophic effector Tox1 from Phaeosphaeria nodorum (strain SN15 / ATCC MYA-4574 / FGSC 10173) (Glume blotch fungus).